The chain runs to 57 residues: Large ribosomal subunit protein bL32c (57 aa).

It belongs to the bacterial ribosomal protein bL32 family.

It is found in the plastid. The protein resides in the chloroplast. This Phalaenopsis aphrodite subsp. formosana (Moth orchid) protein is Large ribosomal subunit protein bL32c.